The primary structure comprises 501 residues: ATP synthase subunit alpha (501 aa).

169-176 (GDRQTGKT) lines the ATP pocket.

The protein belongs to the ATPase alpha/beta chains family. As to quaternary structure, F-type ATPases have 2 components, CF(1) - the catalytic core - and CF(0) - the membrane proton channel. CF(1) has five subunits: alpha(3), beta(3), gamma(1), delta(1), epsilon(1). CF(0) has three main subunits: a(1), b(2) and c(9-12). The alpha and beta chains form an alternating ring which encloses part of the gamma chain. CF(1) is attached to CF(0) by a central stalk formed by the gamma and epsilon chains, while a peripheral stalk is formed by the delta and b chains.

The protein localises to the cell membrane. It catalyses the reaction ATP + H2O + 4 H(+)(in) = ADP + phosphate + 5 H(+)(out). Its function is as follows. Produces ATP from ADP in the presence of a proton gradient across the membrane. The alpha chain is a regulatory subunit. The sequence is that of ATP synthase subunit alpha from Streptococcus equi subsp. equi (strain 4047).